Reading from the N-terminus, the 131-residue chain is Large ribosomal subunit protein bL19 (131 aa).

The segment at 107 to 131 is disordered; sequence GKSARIAERAERGSDKGKAAPAAAE. Residues 111–124 show a composition bias toward basic and acidic residues; the sequence is RIAERAERGSDKGK.

It belongs to the bacterial ribosomal protein bL19 family.

This protein is located at the 30S-50S ribosomal subunit interface and may play a role in the structure and function of the aminoacyl-tRNA binding site. The polypeptide is Large ribosomal subunit protein bL19 (Methylobacterium sp. (strain 4-46)).